Consider the following 164-residue polypeptide: Pheromone-binding protein (164 aa).

A signal peptide spans 1–22 (MSIQGQIALALMVNMAVGSVDA). Disulfide bonds link C41–C76, C72–C130, and C119–C139.

Belongs to the PBP/GOBP family. As to quaternary structure, homodimer. As to expression, antenna.

Functionally, this major soluble protein in olfactory sensilla of male moths serves to solubilize the extremely hydrophobic pheromone molecules such as bombykol and to transport pheromone through the aqueous lymph to receptors located on olfactory cilia. The protein is Pheromone-binding protein of Bombyx mori (Silk moth).